The chain runs to 139 residues: Ribonuclease VapC36 (139 aa).

One can recognise a PINc domain in the interval 1–127 (MIVDTSAVVA…GNDFPQTDLE (127 aa)). Mg(2+) contacts are provided by D4 and D100.

This sequence belongs to the PINc/VapC protein family. It depends on Mg(2+) as a cofactor.

Its function is as follows. Toxic component of a type II toxin-antitoxin (TA) system. An RNase. Its cognate antitoxin is VapB36. This Mycobacterium tuberculosis (strain ATCC 25618 / H37Rv) protein is Ribonuclease VapC36.